We begin with the raw amino-acid sequence, 233 residues long: Large ribosomal subunit protein uL1 (233 aa).

This sequence belongs to the universal ribosomal protein uL1 family. Part of the 50S ribosomal subunit.

Binds directly to 23S rRNA. The L1 stalk is quite mobile in the ribosome, and is involved in E site tRNA release. Its function is as follows. Protein L1 is also a translational repressor protein, it controls the translation of the L11 operon by binding to its mRNA. In Campylobacter concisus (strain 13826), this protein is Large ribosomal subunit protein uL1.